The primary structure comprises 235 residues: MADSKMKWGQAWDSSLGTATTSSSSATGSPSPFQNIRVPDTRAPRVAHTTFTLEAFECLAASQAGRLWKQVRQFWVDHFSRRFSPRRPPLRHISSMSTFYLLDHRTRQAELGLNYGEPRTRLSDEAFVFRGGRWTPEGKRASARTPLPSSTIPAWKPQVQPIKSQVLLEENNYLKLQQELLMDMLTETTARMQLLEKKVDADNNPAAPARSWKRKMPKQRGAGVLIIQPRALESR.

A disordered region spans residues 1 to 41 (MADSKMKWGQAWDSSLGTATTSSSSATGSPSPFQNIRVPDT). Low complexity predominate over residues 14 to 32 (SSLGTATTSSSSATGSPSP). The interval 167-181 (LLEENNYLKLQQELL) is leucine-zipper; mediates homodimerization.

The protein belongs to the chibby family. Homodimer. Interacts with CIBAR1 (via BAR-like domain); both proteins form a ninefold symmetric structure at the flagellar base; are recruited to the annulus in a mutually dependent manner and regulate annulus positionning. In terms of tissue distribution, testis-specific.

It is found in the cell projection. Its subcellular location is the cilium. The protein localises to the flagellum. In terms of biological role, plays a key role in the correct positioning of the annulus, a septin-based ring strucure in the sperm flagellum, serving both as a physical barrier and a membrane diffusion barrier that separates the midpiece (MP) from the principal piece (PP). This positioning is essential for proper sperm motility and function. Interacts with CIBAR1 to form a complex which localizes to the curved membrane region of the flagellar pocket. By doing so, may provide stability and rigidity to the periannular membrane to prevent membrane deformation. This function is crucial for halting annulus migration at the proximal end of the fibrous sheath-containing PP. This is Sperm annulus positionning complex subunit Chibby3 (Cby3) from Mus musculus (Mouse).